A 65-amino-acid polypeptide reads, in one-letter code: Large ribosomal subunit protein bL35 (65 aa).

The protein belongs to the bacterial ribosomal protein bL35 family.

The protein is Large ribosomal subunit protein bL35 of Thermoanaerobacter pseudethanolicus (strain ATCC 33223 / 39E) (Clostridium thermohydrosulfuricum).